The sequence spans 445 residues: Fasciclin-like arabinogalactan protein 16 (445 aa).

Positions 1–23 are cleaved as a signal peptide; the sequence is MDSSYGATKFLLLLFLTTSIATA. FAS1 domains follow at residues 35 to 173 and 257 to 400; these read NSNS…ERLL and VKDF…DGVL. Residues Asn-72 and Asn-279 are each glycosylated (N-linked (GlcNAc...) asparagine).

It belongs to the fasciclin-like AGP family.

It is found in the secreted. Its function is as follows. May be a cell surface adhesion protein. The protein is Fasciclin-like arabinogalactan protein 16 (FLA16) of Arabidopsis thaliana (Mouse-ear cress).